A 209-amino-acid polypeptide reads, in one-letter code: Large ribosomal subunit protein uL3 (209 aa).

Positions 127 to 166 (NFGGGSRTHGQSDRLRAPGSVGGSSDPSRTFKGTRMAGRM) are disordered.

It belongs to the universal ribosomal protein uL3 family. As to quaternary structure, part of the 50S ribosomal subunit. Forms a cluster with proteins L14 and L19.

In terms of biological role, one of the primary rRNA binding proteins, it binds directly near the 3'-end of the 23S rRNA, where it nucleates assembly of the 50S subunit. The chain is Large ribosomal subunit protein uL3 from Chlorobaculum tepidum (strain ATCC 49652 / DSM 12025 / NBRC 103806 / TLS) (Chlorobium tepidum).